Here is a 457-residue protein sequence, read N- to C-terminus: Multidrug resistance protein MdtK (457 aa).

Over 1 to 10 the chain is Cytoplasmic; sequence MQKYISEARL. Residues 11–31 traverse the membrane as a helical segment; it reads LLALAIPVILAQIAQTAMGFV. At 32–52 the chain is on the periplasmic side; sequence DTVMAGGYSATDMAAVAIGTS. A helical membrane pass occupies residues 53–73; that stretch reads IWLPAILFGHGLLLALTPVIA. The Cytoplasmic segment spans residues 74–92; it reads QLNGSGRRERIAHQVRQGF. A helical membrane pass occupies residues 93–113; that stretch reads WLAGFVSVLIMLVLWNAGYII. Residues 114-126 are Periplasmic-facing; sequence RYMENIDPALADK. The chain crosses the membrane as a helical span at residues 127–147; the sequence is AVGYLRALLWGAPGYLFFQVA. The Cytoplasmic portion of the chain corresponds to 148-159; the sequence is RNQCEGLAKAKP. The chain crosses the membrane as a helical span at residues 160 to 180; sequence GMVMGFIGLLVNIPVNYIFIY. Over 181 to 188 the chain is Periplasmic; it reads GHFGMPEL. Residues 189 to 209 form a helical membrane-spanning segment; the sequence is GGVGCGVATAAVYWVMFLAMV. Over 210-242 the chain is Cytoplasmic; sequence SYIKRARSMRDIRNEKGTAKPEPAVMKRLIQLG. A helical transmembrane segment spans residues 243-263; sequence LPIALALFLEVTLFAVVALLV. The Periplasmic segment spans residues 264–275; it reads SPLGIVDVAGHQ. Residues 276 to 296 form a helical membrane-spanning segment; that stretch reads IALNFSSLMFVLPMSLAAAVT. The Cytoplasmic portion of the chain corresponds to 297–313; that stretch reads IRVGYRLGQGSTLDAQT. The chain crosses the membrane as a helical span at residues 314-334; the sequence is AARTGLMVGVCMATLTAIFTV. Topologically, residues 335–349 are periplasmic; the sequence is SLREQIALLYNDNPE. A helical membrane pass occupies residues 350–370; that stretch reads VVTLAAHLMLLAAVYQISDSI. The Cytoplasmic segment spans residues 371–386; it reads QVIGSGILRGYKDTRS. The chain crosses the membrane as a helical span at residues 387–407; the sequence is IFYITFTAYWVLGLPSGYILA. The Periplasmic portion of the chain corresponds to 408 to 417; the sequence is LTDLVVEPMG. The helical transmembrane segment at 418 to 438 threads the bilayer; sequence PAGFWIGFIIGLTSAAIMMML. Over 439–457 the chain is Cytoplasmic; that stretch reads RMRFLQRMPSAIILQRASR.

This sequence belongs to the multi antimicrobial extrusion (MATE) (TC 2.A.66.1) family. MdtK subfamily.

It localises to the cell inner membrane. In terms of biological role, multidrug efflux pump that functions probably as a Na(+)/drug antiporter. The sequence is that of Multidrug resistance protein MdtK from Shigella flexneri serotype 5b (strain 8401).